The primary structure comprises 173 residues: MTKDETLLVFTLVVSSVSIFLFGILLFMVLISATRDFRERTKSKLVKIMIWAGIVVITFAIAVRIYPIFIFLLKERIKPLVEALYDKLPWIWEVSLSRYWDRLIDFLDRYLWACAQRIQTGIRKQKGEFVVTFSCRVKKRLYARAIEVGIHLSLLSNLFWILKTTLAVGYRLL.

The protein belongs to the ycf73 family.

It localises to the plastid. It is found in the chloroplast. This is an uncharacterized protein from Saccharum hybrid (Sugarcane).